Reading from the N-terminus, the 294-residue chain is 4-hydroxy-tetrahydrodipicolinate synthase (294 aa).

Threonine 47 lines the pyruvate pocket. Tyrosine 135 functions as the Proton donor/acceptor in the catalytic mechanism. The Schiff-base intermediate with substrate role is filled by lysine 163. A pyruvate-binding site is contributed by valine 205.

The protein belongs to the DapA family. As to quaternary structure, homotetramer; dimer of dimers.

It localises to the cytoplasm. The catalysed reaction is L-aspartate 4-semialdehyde + pyruvate = (2S,4S)-4-hydroxy-2,3,4,5-tetrahydrodipicolinate + H2O + H(+). Its pathway is amino-acid biosynthesis; L-lysine biosynthesis via DAP pathway; (S)-tetrahydrodipicolinate from L-aspartate: step 3/4. Its function is as follows. Catalyzes the condensation of (S)-aspartate-beta-semialdehyde [(S)-ASA] and pyruvate to 4-hydroxy-tetrahydrodipicolinate (HTPA). This Rickettsia bellii (strain OSU 85-389) protein is 4-hydroxy-tetrahydrodipicolinate synthase.